Consider the following 533-residue polypeptide: Protein trichome birefringence-like 18 (533 aa).

A helical; Signal-anchor for type II membrane protein membrane pass occupies residues Val-21 to Leu-41. Residues Ser-93–Ala-171 are disordered. Basic and acidic residues predominate over residues Ser-113–Asp-154. Residues Gly-248–Ser-250 carry the GDS motif motif. A disordered region spans residues His-475–Gln-502. The DCXHWCLPGXXDXWN motif signature appears at Asp-503–Asn-517.

Belongs to the PC-esterase family. TBL subfamily.

It is found in the membrane. Functionally, may act as a bridging protein that binds pectin and other cell wall polysaccharides. Probably involved in maintaining esterification of pectins. May be involved in the specific O-acetylation of cell wall polymers. In Arabidopsis thaliana (Mouse-ear cress), this protein is Protein trichome birefringence-like 18 (TBL18).